A 334-amino-acid chain; its full sequence is Fructose-1,6-bisphosphatase class 1 (334 aa).

The Mg(2+) site is built by glutamate 91, aspartate 113, leucine 115, and aspartate 116. Substrate is bound by residues 116–119 (DGSS), asparagine 208, and lysine 274. A Mg(2+)-binding site is contributed by glutamate 280.

Belongs to the FBPase class 1 family. In terms of assembly, homotetramer. Requires Mg(2+) as cofactor.

The protein localises to the cytoplasm. It carries out the reaction beta-D-fructose 1,6-bisphosphate + H2O = beta-D-fructose 6-phosphate + phosphate. It participates in carbohydrate biosynthesis; gluconeogenesis. This is Fructose-1,6-bisphosphatase class 1 from Janthinobacterium sp. (strain Marseille) (Minibacterium massiliensis).